The following is a 513-amino-acid chain: Ribonuclease Y (513 aa).

A helical transmembrane segment spans residues Ile-3–Leu-23. The tract at residues Leu-77 to Glu-96 is disordered. The span at Ser-82–Glu-96 shows a compositional bias: basic and acidic residues. In terms of domain architecture, KH spans Ser-203–Leu-263. The region spanning Leu-329–Ala-422 is the HD domain.

Belongs to the RNase Y family.

The protein localises to the cell membrane. Functionally, endoribonuclease that initiates mRNA decay. The polypeptide is Ribonuclease Y (Porphyromonas gingivalis (strain ATCC BAA-308 / W83)).